The chain runs to 366 residues: Palmitoyltransferase ZDHHC2 (366 aa).

The Cytoplasmic segment spans residues 1-15 (MAPSGSGGVRRRCRR). The chain crosses the membrane as a helical span at residues 16 to 36 (VLYWIPVVFISLLLGWSYYAY). Residues 37–47 (AIQLCIVSMEN) lie on the Lumenal side of the membrane. Residues 48-68 (IGEQVVCLMAYHLLFAMFVWS) traverse the membrane as a helical segment. The Cytoplasmic portion of the chain corresponds to 69–169 (YWKTIFTLPM…NNCVGFSNYK (101 aa)). The DHHC domain maps to 126 to 176 (RYCDRCQLIKPDRCHHCSVCDKCILKMDHHCPWVNNCVGFSNYKFFLLFLA). Residue cysteine 156 is the S-palmitoyl cysteine intermediate of the active site. The chain crosses the membrane as a helical span at residues 170–190 (FFLLFLAYSLLYCLFIAATDL). The Lumenal portion of the chain corresponds to 191 to 207 (QYFIRFWTNGLPDTQAK). A helical membrane pass occupies residues 208–228 (FHIMFLFFAAAMFSVSLSSLF). Over 229 to 366 (GYHCWLVSKN…NPALTMENET (138 aa)) the chain is Cytoplasmic. Over residues 297 to 316 (VNQDPEQPSTPAGLNSTVKN) the composition is skewed to polar residues. The segment at 297 to 366 (VNQDPEQPST…NPALTMENET (70 aa)) is disordered. The interval 298–366 (NQDPEQPSTP…NPALTMENET (69 aa)) is mediates localization to plasma membrane and recycling endosomes. Positions 326–336 (PLRESQSHLLK) are enriched in basic and acidic residues. The Non-canonical dileucine endocytic signal signature appears at 334–335 (LL). Polar residues predominate over residues 337 to 347 (DSQTWTESSAN). The NPxY-like endocytic signal motif lies at 357–360 (NPAL).

This sequence belongs to the DHHC palmitoyltransferase family. Monomer. Homodimer. The monomeric form has a higher catalytic activity. In terms of processing, autopalmitoylated. As to expression, expressed in all brain regions.

Its subcellular location is the postsynaptic density. The protein localises to the postsynaptic recycling endosome membrane. It is found in the cell membrane. It localises to the endoplasmic reticulum membrane. The protein resides in the golgi apparatus membrane. The catalysed reaction is L-cysteinyl-[protein] + hexadecanoyl-CoA = S-hexadecanoyl-L-cysteinyl-[protein] + CoA. It carries out the reaction L-cysteinyl-[protein] + tetradecanoyl-CoA = S-tetradecanoyl-L-cysteinyl-[protein] + CoA. The enzyme catalyses L-cysteinyl-[protein] + octadecanoyl-CoA = S-octadecanoyl-L-cysteinyl-[protein] + CoA. Functionally, palmitoyltransferase that catalyzes the addition of palmitate onto various protein substrates and is involved in a variety of cellular processes. Has no stringent fatty acid selectivity and in addition to palmitate can also transfer onto target proteins myristate from tetradecanoyl-CoA and stearate from octadecanoyl-CoA. In the nervous system, plays a role in long term synaptic potentiation by palmitoylating AKAP5 through which it regulates protein trafficking from the dendritic recycling endosomes to the plasma membrane and controls both structural and functional plasticity at excitatory synapses. In dendrites, mediates the palmitoylation of DLG4 when synaptic activity decreases and induces synaptic clustering of DLG4 and associated AMPA-type glutamate receptors. Also mediates the de novo and turnover palmitoylation of RGS7BP, a shuttle for Gi/o-specific GTPase-activating proteins/GAPs, promoting its localization to the plasma membrane in response to the activation of G protein-coupled receptors. Through the localization of these GTPase-activating proteins/GAPs, it also probably plays a role in G protein-coupled receptors signaling in neurons. Also probably plays a role in cell adhesion by palmitoylating CD9 and CD151 to regulate their expression and function. Palmitoylates the endoplasmic reticulum protein CKAP4 and regulates its localization to the plasma membrane. Could also palmitoylate LCK and regulate its localization to the plasma membrane. This Mus musculus (Mouse) protein is Palmitoyltransferase ZDHHC2.